The chain runs to 108 residues: Large ribosomal subunit protein uL24 (108 aa).

It belongs to the universal ribosomal protein uL24 family. In terms of assembly, part of the 50S ribosomal subunit.

Its function is as follows. One of two assembly initiator proteins, it binds directly to the 5'-end of the 23S rRNA, where it nucleates assembly of the 50S subunit. Functionally, one of the proteins that surrounds the polypeptide exit tunnel on the outside of the subunit. This is Large ribosomal subunit protein uL24 from Desulfosudis oleivorans (strain DSM 6200 / JCM 39069 / Hxd3) (Desulfococcus oleovorans).